Here is a 65-residue protein sequence, read N- to C-terminus: Large ribosomal subunit protein bL35 (65 aa).

The tract at residues 1-26 (MPKMKSNKGASKRFKKTASGGFKCKQ) is disordered.

It belongs to the bacterial ribosomal protein bL35 family.

The polypeptide is Large ribosomal subunit protein bL35 (Idiomarina loihiensis (strain ATCC BAA-735 / DSM 15497 / L2-TR)).